A 93-amino-acid polypeptide reads, in one-letter code: Integration host factor subunit beta (93 aa).

It belongs to the bacterial histone-like protein family. As to quaternary structure, heterodimer of an alpha and a beta chain.

This protein is one of the two subunits of integration host factor, a specific DNA-binding protein that functions in genetic recombination as well as in transcriptional and translational control. This Glaesserella parasuis serovar 5 (strain SH0165) (Haemophilus parasuis) protein is Integration host factor subunit beta.